We begin with the raw amino-acid sequence, 553 residues long: Arylsulfatase K (553 aa).

The first 16 residues, 1–16 (MLLLLVSVVAALALAA), serve as a signal peptide directing secretion. Positions 40 and 80 each coordinate Ca(2+). Cys80 functions as the Nucleophile in the catalytic mechanism. The residue at position 80 (Cys80) is a 3-oxoalanine (Cys). N-linked (GlcNAc...) asparagine glycosylation occurs at Asn108. Substrate is bound at residue Lys128. The N-linked (GlcNAc...) asparagine glycan is linked to Asn191. Substrate is bound at residue His249. Residue Asn260 is glycosylated (N-linked (GlcNAc...) asparagine). Residues Asp311 and His312 each coordinate Ca(2+). Asn373, Asn411, and Asn496 each carry an N-linked (GlcNAc...) asparagine glycan. Residues 530 to 553 (SPLASSPTQSTSGSQPTLPQSTSG) form a disordered region. Residues 534 to 553 (SSPTQSTSGSQPTLPQSTSG) are compositionally biased toward low complexity.

Belongs to the sulfatase family. It depends on Ca(2+) as a cofactor. Post-translationally, the conversion to 3-oxoalanine (also known as C-formylglycine, FGly), of a serine or cysteine residue in prokaryotes and of a cysteine residue in eukaryotes, is critical for catalytic activity. The 75-kDa precursor undergoes proteolytic processing to yield a 23 kDa form. In terms of processing, N-glycosylated with both high mannose and complex type sugars.

Its subcellular location is the secreted. It is found in the lysosome. The catalysed reaction is an aryl sulfate + H2O = a phenol + sulfate + H(+). The enzyme catalyses Hydrolysis of the 2-sulfate groups of the 2-O-sulfo-D-glucuronate residues of chondroitin sulfate, heparin and heparitin sulfate.. Functionally, catalyzes the hydrolysis of pseudosubstrates such as p-nitrocatechol sulfate and p-nitrophenyl sulfate. Catalyzes the hydrolysis of the 2-sulfate groups of the 2-O-sulfo-D-glucuronate residues of chondroitin sulfate, heparin and heparitin sulfate. Acts selectively on 2-sulfoglucuronate and lacks activity against 2-sulfoiduronate. This is Arylsulfatase K (Arsk) from Mus musculus (Mouse).